The sequence spans 479 residues: UDP-glycosyltransferase 71B6 (479 aa).

Residues Ser275, 342 to 344 (AEQ), 359 to 367 (HGGWNSTLE), and 381 to 384 (YAEQ) each bind UDP-alpha-D-glucose.

Belongs to the UDP-glycosyltransferase family.

Functionally, glucosyltransferase that glucosylates the (+) enantiomer of abscisic acid ((+)-ABA). Is not active on structural analogs with alterations to the 8'- and 9'- methyl groups. This is UDP-glycosyltransferase 71B6 (UGT71B6) from Arabidopsis thaliana (Mouse-ear cress).